Here is a 274-residue protein sequence, read N- to C-terminus: Thiamine kinase (274 aa).

Belongs to the thiamine kinase family.

The catalysed reaction is thiamine + ATP = thiamine phosphate + ADP + H(+). Its pathway is cofactor biosynthesis; thiamine diphosphate biosynthesis; thiamine phosphate from thiamine: step 1/1. In terms of biological role, catalyzes the ATP-dependent phosphorylation of thiamine to thiamine phosphate. Is involved in thiamine salvage. This is Thiamine kinase from Escherichia coli O157:H7.